The sequence spans 109 residues: Period circadian protein (109 aa).

A disordered region spans residues 59-109 (CFEGSGGSGSSGNFTSGSNLNMRSVTNTSNTGTGTSSESVPLVTLTEALIS). Positions 69–98 (SGNFTSGSNLNMRSVTNTSNTGTGTSSESV) are enriched in low complexity.

Forms a heterodimer with timeless (TIM); the complex then translocates into the nucleus. Phosphorylated with a circadian rhythmicity, probably by the double-time protein (dbt). Phosphorylation could be implicated in the stability of per monomer and in the formation of heterodimer per-tim.

The protein localises to the nucleus. It is found in the cytoplasm. It localises to the perinuclear region. Its function is as follows. Essential for biological clock functions. Determines the period length of circadian and ultradian rhythms; an increase in PER dosage leads to shortened circadian rhythms and a decrease leads to lengthened circadian rhythms. Essential for the circadian rhythmicity of locomotor activity, eclosion behavior, and for the rhythmic component of the male courtship song that originates in the thoracic nervous system. The biological cycle depends on the rhythmic formation and nuclear localization of the TIM-PER complex. Light induces the degradation of TIM, which promotes elimination of PER. Nuclear activity of the heterodimer coordinatively regulates PER and TIM transcription through a negative feedback loop. Behaves as a negative element in circadian transcriptional loop. Does not appear to bind DNA, suggesting indirect transcriptional inhibition. The protein is Period circadian protein (per) of Syritta pipiens (Hoverfly).